The sequence spans 750 residues: Photosystem I P700 chlorophyll a apoprotein A1 (750 aa).

The next 8 helical transmembrane spans lie at Val70–Ala93, Leu156–His179, Leu195–Leu219, Ile291–Tyr309, Trp346–Tyr369, Leu385–Val411, Ala433–His455, and Phe531–Leu549. Positions 573 and 582 each coordinate [4Fe-4S] cluster. The next 2 membrane-spanning stretches (helical) occupy residues His589–Trp610 and Leu664–Phe686. His675 is a chlorophyll a' binding site. Chlorophyll a contacts are provided by Met683 and Tyr691. Trp692 is a phylloquinone binding site. The chain crosses the membrane as a helical span at residues Ala724–Ala744.

This sequence belongs to the PsaA/PsaB family. As to quaternary structure, the PsaA/B heterodimer binds the P700 chlorophyll special pair and subsequent electron acceptors. PSI consists of a core antenna complex that captures photons, and an electron transfer chain that converts photonic excitation into a charge separation. The eukaryotic PSI reaction center is composed of at least 11 subunits. P700 is a chlorophyll a/chlorophyll a' dimer, A0 is one or more chlorophyll a, A1 is one or both phylloquinones and FX is a shared 4Fe-4S iron-sulfur center. serves as cofactor.

The protein resides in the plastid. It is found in the chloroplast thylakoid membrane. It catalyses the reaction reduced [plastocyanin] + hnu + oxidized [2Fe-2S]-[ferredoxin] = oxidized [plastocyanin] + reduced [2Fe-2S]-[ferredoxin]. In terms of biological role, psaA and PsaB bind P700, the primary electron donor of photosystem I (PSI), as well as the electron acceptors A0, A1 and FX. PSI is a plastocyanin-ferredoxin oxidoreductase, converting photonic excitation into a charge separation, which transfers an electron from the donor P700 chlorophyll pair to the spectroscopically characterized acceptors A0, A1, FX, FA and FB in turn. Oxidized P700 is reduced on the lumenal side of the thylakoid membrane by plastocyanin. This chain is Photosystem I P700 chlorophyll a apoprotein A1, found in Acorus calamus (Sweet flag).